We begin with the raw amino-acid sequence, 224 residues long: Heme response regulator HssR (224 aa).

The Response regulatory domain maps to 3–116 (NCLIVDDDKK…ELLFRIKAVL (114 aa)). Asp52 bears the 4-aspartylphosphate mark. A DNA-binding region (ompR/PhoB-type) is located at residues 124 to 222 (DNELQLGNLI…VRGQGYRVDQ (99 aa)).

In terms of processing, phosphorylated by HssS.

Its subcellular location is the cytoplasm. Its function is as follows. Member of the two-component regulatory system HssS/HssR involved in intracellular heme homeostasis and tempering of staphylococcal virulence. Phosphorylated HssR binds to a direct repeat sequence within hrtAB promoter and activates the expression of hrtAB, an efflux pump, in response to extracellular heme, hemin, hemoglobin or blood. The polypeptide is Heme response regulator HssR (hssR) (Staphylococcus epidermidis (strain ATCC 35984 / DSM 28319 / BCRC 17069 / CCUG 31568 / BM 3577 / RP62A)).